Here is a 465-residue protein sequence, read N- to C-terminus: MAP kinase-interacting serine/threonine-protein kinase 2 (465 aa).

The segment at 23–72 (ELAFSLDQPDHGDSDFGLQCSARPDMPASQPIDIPDAKKRGKKKKRGRAT) is disordered. The Nuclear localization signal motif lies at 60–66 (KKRGKKK). The residue at position 74 (S74) is a Phosphoserine. One can recognise a Protein kinase domain in the interval 84-388 (QLQEDVLGEG…TPMVLQRNSC (305 aa)). ATP contacts are provided by residues 90–98 (LGEGAHARV) and K113. 160 to 162 (EKM) is a staurosporine binding site. Catalysis depends on D205, which acts as the Proton acceptor. E209 contacts staurosporine. Residues T244 and T249 each carry the phosphothreonine modification. C299, C311, and C314 together coordinate Zn(2+). T379 is modified (phosphothreonine). A phosphoserine mark is found at S437 and S440. Positions 444 to 448 (LAQRR) match the MAP kinase binding motif. Phosphoserine is present on S452.

The protein belongs to the protein kinase superfamily. CAMK Ser/Thr protein kinase family. Monomer. Interacts with the C-terminal regions of EIF4G1 and EIF4G2; this interaction is promoted when MAPK pathways are repressed but repressed upon ERK proteins activation. Also binds to dephosphorylated MAPK3/ERK1 and MAPK1/ERK2. Isoform 1 interaction with phosphorylated MAPK3/ERK1 and MAPK1/ERK2 protects it from dephosphorylation and inactivation. Isoform 2 interacts with ESR2 and EIF4E in the nucleus. It depends on Mg(2+) as a cofactor. Zn(2+) is required as a cofactor. Dual phosphorylation of Thr-244 and Thr-249 activates the kinase. Phosphorylation of Thr-379 activates the kinase. Phosphorylated upon arsenic trioxide As(2)O(3) treatment. Phosphorylated by MAPK1/ERK2, MAPK11 and MAPK14. Dephosphorylated by PP2A. In terms of tissue distribution, ubiquitously expressed in all tissues examined. Isoform 2 is expressed at higher levels in the ovary than is isoform 1.

The protein localises to the nucleus. Its subcellular location is the PML body. The protein resides in the cytoplasm. It catalyses the reaction L-seryl-[protein] + ATP = O-phospho-L-seryl-[protein] + ADP + H(+). The enzyme catalyses L-threonyl-[protein] + ATP = O-phospho-L-threonyl-[protein] + ADP + H(+). Inhibited by CGP57380 and staurosporine. Activated by phosphorylation in a negative-feedback regulatory manner in response to chemotherapy (e.g. cytarabine) and thus impairs the generation of antileukemic responses. Its function is as follows. Serine/threonine-protein kinase that phosphorylates SFPQ/PSF, HNRNPA1 and EIF4E. May play a role in the response to environmental stress and cytokines. Appears to regulate translation by phosphorylating EIF4E, thus increasing the affinity of this protein for the 7-methylguanosine-containing mRNA cap. Required for mediating PP2A-inhibition-induced EIF4E phosphorylation. Triggers EIF4E shuttling from cytoplasm to nucleus. Isoform 1 displays a high basal kinase activity, but isoform 2 exhibits a very low kinase activity. Acts as a mediator of the suppressive effects of IFNgamma on hematopoiesis. Negative regulator for signals that control generation of arsenic trioxide As(2)O(3)-dependent apoptosis and anti-leukemic responses. Involved in anti-apoptotic signaling in response to serum withdrawal. The sequence is that of MAP kinase-interacting serine/threonine-protein kinase 2 (MKNK2) from Homo sapiens (Human).